Reading from the N-terminus, the 143-residue chain is Large ribosomal subunit protein uL13 (143 aa).

The protein belongs to the universal ribosomal protein uL13 family. As to quaternary structure, part of the 50S ribosomal subunit.

This protein is one of the early assembly proteins of the 50S ribosomal subunit, although it is not seen to bind rRNA by itself. It is important during the early stages of 50S assembly. The chain is Large ribosomal subunit protein uL13 from Rubrobacter xylanophilus (strain DSM 9941 / JCM 11954 / NBRC 16129 / PRD-1).